Reading from the N-terminus, the 504-residue chain is Glutamate--tRNA ligase (504 aa).

The short motif at 9–19 (PSPTGDPHVGT) is the 'HIGH' region element. Residues 248 to 252 (KISKR) carry the 'KMSKS' region motif. K251 lines the ATP pocket.

This sequence belongs to the class-I aminoacyl-tRNA synthetase family. Glutamate--tRNA ligase type 1 subfamily. As to quaternary structure, monomer.

The protein localises to the cytoplasm. The catalysed reaction is tRNA(Glu) + L-glutamate + ATP = L-glutamyl-tRNA(Glu) + AMP + diphosphate. In terms of biological role, catalyzes the attachment of glutamate to tRNA(Glu) in a two-step reaction: glutamate is first activated by ATP to form Glu-AMP and then transferred to the acceptor end of tRNA(Glu). This chain is Glutamate--tRNA ligase, found in Acidothermus cellulolyticus (strain ATCC 43068 / DSM 8971 / 11B).